A 115-amino-acid chain; its full sequence is Tyrosine-protein phosphatase 21 (115 aa).

One can recognise a Tyrosine-protein phosphatase domain in the interval 1-115 (WLMIVEKECR…EIGGDAPMVV (115 aa)). Aspartate 83 contacts substrate.

The protein belongs to the protein-tyrosine phosphatase family.

The catalysed reaction is O-phospho-L-tyrosyl-[protein] + H2O = L-tyrosyl-[protein] + phosphate. In Styela plicata (Wrinkled sea squirt), this protein is Tyrosine-protein phosphatase 21 (STY-21).